We begin with the raw amino-acid sequence, 148 residues long: Large ribosomal subunit protein uL15 (148 aa).

Residues 1–57 (MRLHDLYPFPEERKTRKRVGRGSGSGLGCTSGKGNKGQNARAGGGVRPGFEGGQMPL) are disordered. Composition is skewed to gly residues over residues 21 to 35 (RGSG…GKGN) and 42 to 52 (AGGGVRPGFEG).

The protein belongs to the universal ribosomal protein uL15 family. As to quaternary structure, part of the 50S ribosomal subunit.

In terms of biological role, binds to the 23S rRNA. The sequence is that of Large ribosomal subunit protein uL15 from Nitratidesulfovibrio vulgaris (strain ATCC 29579 / DSM 644 / CCUG 34227 / NCIMB 8303 / VKM B-1760 / Hildenborough) (Desulfovibrio vulgaris).